We begin with the raw amino-acid sequence, 20 residues long: Cytochrome c oxidase subunit 6A1, mitochondrial (20 aa).

The protein belongs to the cytochrome c oxidase subunit 6A family. Component of the cytochrome c oxidase (complex IV, CIV), a multisubunit enzyme composed of 14 subunits. The complex is composed of a catalytic core of 3 subunits MT-CO1, MT-CO2 and MT-CO3, encoded in the mitochondrial DNA, and 11 supernumerary subunits COX4I, COX5A, COX5B, COX6A, COX6B, COX6C, COX7A, COX7B, COX7C, COX8 and NDUFA4, which are encoded in the nuclear genome. The complex exists as a monomer or a dimer and forms supercomplexes (SCs) in the inner mitochondrial membrane with NADH-ubiquinone oxidoreductase (complex I, CI) and ubiquinol-cytochrome c oxidoreductase (cytochrome b-c1 complex, complex III, CIII), resulting in different assemblies (supercomplex SCI(1)III(2)IV(1) and megacomplex MCI(2)III(2)IV(2)). Liver specific isoform.

The protein resides in the mitochondrion inner membrane. It participates in energy metabolism; oxidative phosphorylation. Functionally, component of the cytochrome c oxidase, the last enzyme in the mitochondrial electron transport chain which drives oxidative phosphorylation. The respiratory chain contains 3 multisubunit complexes succinate dehydrogenase (complex II, CII), ubiquinol-cytochrome c oxidoreductase (cytochrome b-c1 complex, complex III, CIII) and cytochrome c oxidase (complex IV, CIV), that cooperate to transfer electrons derived from NADH and succinate to molecular oxygen, creating an electrochemical gradient over the inner membrane that drives transmembrane transport and the ATP synthase. Cytochrome c oxidase is the component of the respiratory chain that catalyzes the reduction of oxygen to water. Electrons originating from reduced cytochrome c in the intermembrane space (IMS) are transferred via the dinuclear copper A center (CU(A)) of subunit 2 and heme A of subunit 1 to the active site in subunit 1, a binuclear center (BNC) formed by heme A3 and copper B (CU(B)). The BNC reduces molecular oxygen to 2 water molecules unsing 4 electrons from cytochrome c in the IMS and 4 protons from the mitochondrial matrix. In Canis lupus familiaris (Dog), this protein is Cytochrome c oxidase subunit 6A1, mitochondrial (COX6A1).